We begin with the raw amino-acid sequence, 833 residues long: Interleukin enhancer-binding factor 3 homolog (833 aa).

Residues 11–379 (RIFVNDDRHV…PMKRPIEEES (369 aa)) form the DZF domain. Disordered regions lie at residues 65 to 86 (VNALDTDGEGDKETEPSTGEQA) and 339 to 403 (DPLP…KAEP). Phosphothreonine is present on T70. The segment covering 373–385 (RPIEEESTDEKNP) has biased composition (basic and acidic residues). 2 DRBM domains span residues 402–471 (EPAQ…DMGL) and 527–593 (HGKN…KLFP). Disordered stretches follow at residues 597–651 (NSEV…FNQG), 702–762 (QSDS…GGGA), and 775–833 (AYPS…YQYR). The segment covering 629-639 (GRGRGRGRGRG) has biased composition (basic residues). The segment covering 640–651 (RGFNNGGGFNQG) has biased composition (gly residues). Polar residues predominate over residues 775 to 818 (AYPSQVTGGQEYNYEGYSNQSNYNSQGGANQNFGGNSAPYNSGQ).

Its subcellular location is the nucleus. It is found in the nucleolus. The protein localises to the cytoplasm. RNA-binding protein that plays an essential role in the biogenesis of circular RNAs (circRNAs) which are produced by back-splicing circularization of pre-mRNAs. Within the nucleus, promotes circRNAs processing by stabilizing the regulatory elements residing in the flanking introns of the circularized exons. Plays thereby a role in the back-splicing of a subset of circRNAs. As a consequence, participates in a wide range of transcriptional and post-transcriptional processes. Binds to poly-U elements and AU-rich elements (AREs) in the 3'-UTR of target mRNAs. Upon viral infection, ILF3 accumulates in the cytoplasm and participates in the innate antiviral response. Mechanistically, ILF3 becomes phosphorylated and activated by the double-stranded RNA-activated protein kinase/PKR which releases ILF3 from cellular mature circRNAs. In turn, unbound ILF3 molecules are able to interact with and thus inhibit viral mRNAs. The chain is Interleukin enhancer-binding factor 3 homolog (ilf3) from Danio rerio (Zebrafish).